The sequence spans 188 residues: GTP cyclohydrolase 1 (188 aa).

Positions 78, 81, and 150 each coordinate Zn(2+).

It belongs to the GTP cyclohydrolase I family. As to quaternary structure, toroid-shaped homodecamer, composed of two pentamers of five dimers.

It carries out the reaction GTP + H2O = 7,8-dihydroneopterin 3'-triphosphate + formate + H(+). It participates in cofactor biosynthesis; 7,8-dihydroneopterin triphosphate biosynthesis; 7,8-dihydroneopterin triphosphate from GTP: step 1/1. The chain is GTP cyclohydrolase 1 from Geobacillus kaustophilus (strain HTA426).